Consider the following 175-residue polypeptide: Co-chaperone protein HscB homolog (175 aa).

A J domain is found at 7 to 79 (SHFDLFDLPA…LKRATYLLHL (73 aa)).

Belongs to the HscB family. In terms of assembly, interacts with HscA and stimulates its ATPase activity.

In terms of biological role, co-chaperone involved in the maturation of iron-sulfur cluster-containing proteins. Seems to help targeting proteins to be folded toward HscA. This chain is Co-chaperone protein HscB homolog, found in Paraburkholderia phytofirmans (strain DSM 17436 / LMG 22146 / PsJN) (Burkholderia phytofirmans).